The sequence spans 122 residues: uncharacterized protein (122 aa).

The protein resides in the mitochondrion. This is an uncharacterized protein from Arabidopsis thaliana (Mouse-ear cress).